A 349-amino-acid chain; its full sequence is 4-hydroxy-3-methylbut-2-en-1-yl diphosphate synthase (flavodoxin) (349 aa).

Residues Cys-264, Cys-267, Cys-299, and Glu-306 each contribute to the [4Fe-4S] cluster site.

The protein belongs to the IspG family. The cofactor is [4Fe-4S] cluster.

The enzyme catalyses (2E)-4-hydroxy-3-methylbut-2-enyl diphosphate + oxidized [flavodoxin] + H2O + 2 H(+) = 2-C-methyl-D-erythritol 2,4-cyclic diphosphate + reduced [flavodoxin]. The protein operates within isoprenoid biosynthesis; isopentenyl diphosphate biosynthesis via DXP pathway; isopentenyl diphosphate from 1-deoxy-D-xylulose 5-phosphate: step 5/6. In terms of biological role, converts 2C-methyl-D-erythritol 2,4-cyclodiphosphate (ME-2,4cPP) into 1-hydroxy-2-methyl-2-(E)-butenyl 4-diphosphate. This is 4-hydroxy-3-methylbut-2-en-1-yl diphosphate synthase (flavodoxin) from Clostridium tetani (strain Massachusetts / E88).